Reading from the N-terminus, the 552-residue chain is MERFLRKYNISGDYANATRSILAISPQWTCSHLKRNCLFNGMCAKQNFERAMIAATDAEEPIKAIRLIELAKEAMYDRETVWLQCFKSFSQPYEEDIEGKIKRCGAQLLEDYRKSGMMEEAVKQSALINSERVRLDDSLSAIPYIYVPIKEGQIVNPTFISRYRQIAYYFYNPDAADDWIDPNLFGVRGQHHQIKREVERQINTCPYTGYKGGIFQVMYLPIQLINFLRMDDFARHFNRYASMAIQQYLRVGYLEEIRYVQQLFGKVPSGEFPLHQMMLMRRDFPTRDRNIVEARVKRSGDENWQSWLLPMVLVREGLDQQEKWEWLLEYMDRKHICQLCYLKHSKQIQTCSVIDVRASELIGCSPFRTVKIEEHVGNEPIFKTKLIRDQQIGRIGDHYYTTSCYTGAEALVTTAIHIHRWIRGCGIWNDEGWQEGVFMLGRVLLRWELTKAQRSALLRLFCFVCYGYAPRAYGTVPDWNNLGSFLDIILKGPELSEDEDERAYATMFEMVRCIITLCYAERVHFAGFTAPACESGEVINLAARMSQMWMEY.

This sequence belongs to the orbivirus non-structural protein NS1 family.

The chain is Non-structural protein NS1 (Segment-5) from Bluetongue virus 1 (isolate Australia) (BTV 1).